The chain runs to 76 residues: Bowman-Birk type proteinase inhibitor DE-3 (76 aa).

Cystine bridges form between Cys16–Cys70, Cys17–Cys32, Cys20–Cys66, Cys22–Cys30, Cys40–Cys47, Cys44–Cys59, and Cys49–Cys57.

Belongs to the Bowman-Birk serine protease inhibitor family.

In Macrotyloma axillare (Perennial horse gram), this protein is Bowman-Birk type proteinase inhibitor DE-3.